The chain runs to 171 residues: Methyl-coenzyme M reductase operon protein D (171 aa).

MCR is composed of three subunits: alpha, beta, and gamma. The function of proteins C and D is not known.

This chain is Methyl-coenzyme M reductase operon protein D (mcrD), found in Methanosarcina barkeri (strain Fusaro / DSM 804).